Here is a 236-residue protein sequence, read N- to C-terminus: Ribose-5-phosphate isomerase A (236 aa).

Substrate-binding positions include 29–32 (SGST), 86–89 (DGAD), and 99–102 (KGGG). Catalysis depends on Glu-108, which acts as the Proton acceptor. Lys-126 serves as a coordination point for substrate.

It belongs to the ribose 5-phosphate isomerase family. In terms of assembly, homodimer.

It carries out the reaction aldehydo-D-ribose 5-phosphate = D-ribulose 5-phosphate. It functions in the pathway carbohydrate degradation; pentose phosphate pathway; D-ribose 5-phosphate from D-ribulose 5-phosphate (non-oxidative stage): step 1/1. Functionally, catalyzes the reversible conversion of ribose-5-phosphate to ribulose 5-phosphate. This is Ribose-5-phosphate isomerase A from Prochlorococcus marinus (strain NATL1A).